The sequence spans 494 residues: UPF0371 protein spr0309 (494 aa).

It belongs to the UPF0371 family.

In Streptococcus pneumoniae (strain ATCC BAA-255 / R6), this protein is UPF0371 protein spr0309.